Consider the following 152-residue polypeptide: Ribosome maturation factor RimP (152 aa).

This sequence belongs to the RimP family.

The protein resides in the cytoplasm. Functionally, required for maturation of 30S ribosomal subunits. This Salmonella arizonae (strain ATCC BAA-731 / CDC346-86 / RSK2980) protein is Ribosome maturation factor RimP.